The chain runs to 157 residues: Small ribosomal subunit protein uS9 (157 aa).

The protein belongs to the universal ribosomal protein uS9 family.

In Caulobacter sp. (strain K31), this protein is Small ribosomal subunit protein uS9.